The chain runs to 322 residues: MDPTISTLDTELTPINGTEETLCYKQTLSLTVLTCIVSLVGLTGNAVVLWLLGCRMRRNAFSIYILNLAAADFLFLSGRLIYSLLSFISIPHTISKILYPVMMFSYFAGLSFLSAVSTERCLSVLWPIWYRCHRPTHLSAVVCVLLWALSLLRSILEWMLCGFLFSGADSAWCQTSDFITVAWLIFLCVVLCGSSLVLLIRILCGSRKIPLTRLYVTILLTVLVFLLCGLPFGIQFFLFLWIHVDREVLFCHVHLVSIFLSALNSSANPIIYFFVGSFRQRQNRQNLKLVLQRALQDASEVDEGGGQLPEEILELSGSRLEQ.

At 1–31 the chain is on the extracellular side; it reads MDPTISTLDTELTPINGTEETLCYKQTLSLT. N-linked (GlcNAc...) asparagine glycosylation occurs at asparagine 16. The chain crosses the membrane as a helical span at residues 32-52; the sequence is VLTCIVSLVGLTGNAVVLWLL. Residues 53 to 67 lie on the Cytoplasmic side of the membrane; the sequence is GCRMRRNAFSIYILN. A helical transmembrane segment spans residues 68 to 88; sequence LAAADFLFLSGRLIYSLLSFI. Topologically, residues 89-96 are extracellular; that stretch reads SIPHTISK. Residues 97 to 117 traverse the membrane as a helical segment; it reads ILYPVMMFSYFAGLSFLSAVS. Residues 118–144 are Cytoplasmic-facing; sequence TERCLSVLWPIWYRCHRPTHLSAVVCV. A helical membrane pass occupies residues 145-165; sequence LLWALSLLRSILEWMLCGFLF. The Extracellular portion of the chain corresponds to 166–177; that stretch reads SGADSAWCQTSD. A helical membrane pass occupies residues 178-198; sequence FITVAWLIFLCVVLCGSSLVL. At 199 to 221 the chain is on the cytoplasmic side; sequence LIRILCGSRKIPLTRLYVTILLT. A helical transmembrane segment spans residues 222–242; it reads VLVFLLCGLPFGIQFFLFLWI. The Extracellular portion of the chain corresponds to 243–254; sequence HVDREVLFCHVH. Residues 255-275 form a helical membrane-spanning segment; the sequence is LVSIFLSALNSSANPIIYFFV. The Cytoplasmic segment spans residues 276–322; it reads GSFRQRQNRQNLKLVLQRALQDASEVDEGGGQLPEEILELSGSRLEQ.

Belongs to the G-protein coupled receptor 1 family. Mas subfamily. As to expression, uniquely localized in a subset of small dorsal root and trigeminal sensory neurons.

The protein localises to the cell membrane. In terms of biological role, orphan receptor. Probably involved in the function of nociceptive neurons. May regulate nociceptor function and/or development, including the sensation or modulation of pain. Potently activated by enkephalins including BAM22 (bovine adrenal medulla peptide 22) and BAM (8-22). BAM22 is the most potent compound and evoked a large and dose-dependent release of intracellular calcium in stably transfected cells. G(alpha)q proteins are involved in the calcium-signaling pathway. Activated by the antimalarial drug, chloroquine. May mediate chloroquine-induced itch, in a histamine-independent manner. The chain is Mas-related G-protein coupled receptor member X1 (MRGPRX1) from Homo sapiens (Human).